The sequence spans 264 residues: Phosphonoacetaldehyde hydrolase (264 aa).

Asp-9 serves as the catalytic Nucleophile. Residues Asp-9 and Ala-11 each contribute to the Mg(2+) site. The active-site Schiff-base intermediate with substrate is Lys-50. Asp-183 is a binding site for Mg(2+).

Belongs to the HAD-like hydrolase superfamily. PhnX family. In terms of assembly, homodimer. Mg(2+) is required as a cofactor.

It carries out the reaction phosphonoacetaldehyde + H2O = acetaldehyde + phosphate + H(+). Its function is as follows. Involved in phosphonate degradation. The sequence is that of Phosphonoacetaldehyde hydrolase from Bacillus mycoides (strain KBAB4) (Bacillus weihenstephanensis).